Here is a 468-residue protein sequence, read N- to C-terminus: uncharacterized protein (468 aa).

Residues 447-468 (AVHVSNGDKPKVALPDTQLGSH) form a disordered region.

The protein belongs to the mycobacterial PPE family.

This is an uncharacterized protein from Mycobacterium tuberculosis (strain ATCC 25618 / H37Rv).